The primary structure comprises 115 residues: UPF0102 protein Swol_1475 (115 aa).

This sequence belongs to the UPF0102 family.

The protein is UPF0102 protein Swol_1475 of Syntrophomonas wolfei subsp. wolfei (strain DSM 2245B / Goettingen).